A 488-amino-acid polypeptide reads, in one-letter code: 3-octaprenyl-4-hydroxybenzoate carboxy-lyase (488 aa).

N172 is a binding site for Mn(2+). Prenylated FMN is bound by residues 175 to 177 (IYR), 189 to 191 (RWL), and 194 to 195 (RG). E238 is a Mn(2+) binding site. D287 serves as the catalytic Proton donor.

This sequence belongs to the UbiD family. In terms of assembly, homohexamer. The cofactor is prenylated FMN. It depends on Mn(2+) as a cofactor.

It is found in the cell membrane. The enzyme catalyses a 4-hydroxy-3-(all-trans-polyprenyl)benzoate + H(+) = a 2-(all-trans-polyprenyl)phenol + CO2. Its pathway is cofactor biosynthesis; ubiquinone biosynthesis. Catalyzes the decarboxylation of 3-octaprenyl-4-hydroxy benzoate to 2-octaprenylphenol, an intermediate step in ubiquinone biosynthesis. This chain is 3-octaprenyl-4-hydroxybenzoate carboxy-lyase, found in Pseudomonas fluorescens (strain ATCC BAA-477 / NRRL B-23932 / Pf-5).